The sequence spans 1825 residues: Proteasome activator complex subunit 4B (1825 aa).

HEAT repeat units follow at residues 458-502 (PEGP…LVDC), 981-1020 (NFCC…NHCG), 1162-1200 (YPLP…QLKR), 1336-1374 (DAFL…GSKH), 1618-1656 (PEQI…YNLF), and 1662-1700 (EQCV…CNFL). The tract at residues 1632–1720 (AGSSSWHARY…EALCKTRLPK (89 aa)) is bromodomain-like (BRDL).

The protein belongs to the BLM10 family. As to quaternary structure, homodimer. Interacts with the 20S and 26S proteasomes.

The protein localises to the cytoplasm. Its subcellular location is the cytosol. It is found in the nucleus. The protein resides in the nucleus speckle. In terms of biological role, associated component of the proteasome that specifically recognizes acetylated histones and promotes ATP- and ubiquitin-independent degradation of core histones during DNA damage response. Recognizes and binds acetylated histones via its bromodomain-like (BRDL) region and activates the proteasome by opening the gated channel for substrate entry. Binds to the core proteasome via its C-terminus, which occupies the same binding sites as the proteasomal ATPases, opening the closed structure of the proteasome via an active gating mechanism. involved in DNA damage response in somatic cells: binds to acetylated histones and promotes degradation of histones. This chain is Proteasome activator complex subunit 4B (psme4b), found in Danio rerio (Zebrafish).